The sequence spans 218 residues: Protein GrpE (218 aa).

Residues 1–75 (MTTPNGMPDN…DVDPDLDGDG (75 aa)) are disordered. The span at 23 to 40 (SADRAEQAAEEAAARQAE) shows a compositional bias: basic and acidic residues. A compositionally biased stretch (acidic residues) spans 48–75 (SEEEISPELEAEINDLLSDVDPDLDGDG).

It belongs to the GrpE family. In terms of assembly, homodimer.

It is found in the cytoplasm. Its function is as follows. Participates actively in the response to hyperosmotic and heat shock by preventing the aggregation of stress-denatured proteins, in association with DnaK and GrpE. It is the nucleotide exchange factor for DnaK and may function as a thermosensor. Unfolded proteins bind initially to DnaJ; upon interaction with the DnaJ-bound protein, DnaK hydrolyzes its bound ATP, resulting in the formation of a stable complex. GrpE releases ADP from DnaK; ATP binding to DnaK triggers the release of the substrate protein, thus completing the reaction cycle. Several rounds of ATP-dependent interactions between DnaJ, DnaK and GrpE are required for fully efficient folding. The polypeptide is Protein GrpE (Corynebacterium glutamicum (strain ATCC 13032 / DSM 20300 / JCM 1318 / BCRC 11384 / CCUG 27702 / LMG 3730 / NBRC 12168 / NCIMB 10025 / NRRL B-2784 / 534)).